Here is a 346-residue protein sequence, read N- to C-terminus: Dimethyladenosine transferase 1, mitochondrial (346 aa).

The transit peptide at 1 to 27 (MATQGVLAKYRLPPLPTIGEIIKLFNL) directs the protein to the mitochondrion. Residues N36, L38, G63, E85, K86, D111, I112, and N141 each contribute to the S-adenosyl-L-methionine site.

The protein belongs to the class I-like SAM-binding methyltransferase superfamily. rRNA adenine N(6)-methyltransferase family. KsgA subfamily.

The protein localises to the mitochondrion. The enzyme catalyses adenosine(N)/adenosine(N+1) in rRNA + 4 S-adenosyl-L-methionine = N(6)-dimethyladenosine(N)/N(6)-dimethyladenosine(N+1) in rRNA + 4 S-adenosyl-L-homocysteine + 4 H(+). Mitochondrial methyltransferase which uses S-adenosyl methionine to dimethylate two highly conserved adjacent adenosine residues (A1583 and A1584) within the loop of helix 45 at the 3-prime end of 12S rRNA, thereby regulating the assembly or stability of the small subunit of the mitochondrial ribosome. Also required for basal transcription of mitochondrial DNA, probably via its interaction with POLRMT and TFAM. Stimulates transcription independently of the methyltransferase activity. This is Dimethyladenosine transferase 1, mitochondrial (tfb1m) from Xenopus tropicalis (Western clawed frog).